We begin with the raw amino-acid sequence, 240 residues long: UDP-2,3-diacylglucosamine hydrolase (240 aa).

Mn(2+) contacts are provided by aspartate 8, histidine 10, aspartate 41, asparagine 79, and histidine 114. Position 79–80 (79–80 (NR)) interacts with substrate. The substrate site is built by aspartate 122, serine 160, asparagine 164, lysine 167, and histidine 195. Mn(2+)-binding residues include histidine 195 and histidine 197.

The protein belongs to the LpxH family. It depends on Mn(2+) as a cofactor.

It localises to the cell inner membrane. The enzyme catalyses UDP-2-N,3-O-bis[(3R)-3-hydroxytetradecanoyl]-alpha-D-glucosamine + H2O = 2-N,3-O-bis[(3R)-3-hydroxytetradecanoyl]-alpha-D-glucosaminyl 1-phosphate + UMP + 2 H(+). Its pathway is glycolipid biosynthesis; lipid IV(A) biosynthesis; lipid IV(A) from (3R)-3-hydroxytetradecanoyl-[acyl-carrier-protein] and UDP-N-acetyl-alpha-D-glucosamine: step 4/6. Functionally, hydrolyzes the pyrophosphate bond of UDP-2,3-diacylglucosamine to yield 2,3-diacylglucosamine 1-phosphate (lipid X) and UMP by catalyzing the attack of water at the alpha-P atom. Involved in the biosynthesis of lipid A, a phosphorylated glycolipid that anchors the lipopolysaccharide to the outer membrane of the cell. The chain is UDP-2,3-diacylglucosamine hydrolase from Salmonella typhi.